A 68-amino-acid polypeptide reads, in one-letter code: U-poneritoxin(01)-Om4b (68 aa).

The first 25 residues, 1 to 25, serve as a signal peptide directing secretion; that stretch reads MKPSGLTLAFLVVFMMAIMYNSVQA. Residues 26–39 constitute a propeptide that is removed on maturation; sequence EALADADAEAFAEA.

Belongs to the formicidae venom precursor-01 superfamily. In terms of assembly, homo- or heterodimer with PLP4 (AC A0A348G5W0); disulfide-linked. In terms of processing, truncated sequences of this peptide have also been found in the venom. It is possible they have been cleaved in the venom. Expressed by the venom gland.

Its subcellular location is the secreted. In terms of biological role, this homodimer composed of two cationic amphipathic alpha-helical peptides has antimicrobial activities against E.coli, S.aureus (MIC=3.1 uM), and S.cerevisiae (MIC=3.1 uM). It also shows histamine-releasing activity (66.4% at 10 uM) and a weak hemolytic activity (10.5% at 50 uM). The sequence is that of U-poneritoxin(01)-Om4b from Odontomachus monticola (Trap-jaw ant).